The following is a 433-amino-acid chain: Glutamyl-tRNA reductase (433 aa).

Substrate-binding positions include 49 to 52 (TCNR), Ser-109, 114 to 116 (EGQ), and Gln-120. The active-site Nucleophile is the Cys-50. Residue 189 to 194 (GAGKMS) participates in NADP(+) binding.

It belongs to the glutamyl-tRNA reductase family. As to quaternary structure, homodimer.

The enzyme catalyses (S)-4-amino-5-oxopentanoate + tRNA(Glu) + NADP(+) = L-glutamyl-tRNA(Glu) + NADPH + H(+). It participates in porphyrin-containing compound metabolism; protoporphyrin-IX biosynthesis; 5-aminolevulinate from L-glutamyl-tRNA(Glu): step 1/2. Its pathway is porphyrin-containing compound metabolism; chlorophyll biosynthesis. In terms of biological role, catalyzes the NADPH-dependent reduction of glutamyl-tRNA(Glu) to glutamate 1-semialdehyde (GSA). This is Glutamyl-tRNA reductase from Acaryochloris marina (strain MBIC 11017).